We begin with the raw amino-acid sequence, 1832 residues long: Multifunctional protein pyr-3 (1832 aa).

The GATase (Glutamine amidotransferase) stretch occupies residues 2-400 (AATVYRPATA…PGPRDTEFLF (399 aa)). Residues Ser64, Gly273, and Gly275 each coordinate L-glutamine. One can recognise a Glutamine amidotransferase type-1 domain in the interval 228-413 (RILCLDVGMK…IQTVAKCTTD (186 aa)). Catalysis depends on Cys302, which acts as the Nucleophile; for GATase activity. Residues Leu303, Gln306, Asn344, Gly346, and Tyr347 each contribute to the L-glutamine site. Residues His386 and Glu388 each act as for GATase activity in the active site. The interval 401–442 (DVFIQTVAKCTTDNTLLQKGVEFPGGTTEENERLHPRVDVKK) is linker. Positions 443–983 (VLVLGSGGLS…SEHDVSFEDR (541 aa)) are CPSase A. The segment at 443-1484 (VLVLGSGGLS…TNVKNAKILV (1042 aa)) is CPSase (Carbamoyl phosphate synthase). Arg560, Arg600, Gly606, Gly607, Arg637, Met639, Glu644, Gly670, Ile671, His672, Gln713, and Glu727 together coordinate ATP. 2 ATP-grasp domains span residues 564–756 (ARSM…KLGL) and 1102–1293 (SRML…KAIM). Residues Gln713, Glu727, and Asn729 each coordinate Mg(2+). Positions 713, 727, and 729 each coordinate Mn(2+). Positions 984-1484 (GVMVLGSGVY…TNVKNAKILV (501 aa)) are CPSase B. ATP-binding residues include Arg1138, Lys1177, Ile1179, Glu1184, Gly1209, Val1210, His1211, Ser1212, Gln1252, and Glu1264. The Mg(2+) site is built by Gln1252, Glu1264, and Asn1266. Gln1252, Glu1264, and Asn1266 together coordinate Mn(2+). The region spanning 1359–1507 (FKVPKKNILL…RDYQTSHTPL (149 aa)) is the MGS-like domain. The segment at 1485 to 1528 (EAIARYRDMEIGERDYQTSHTPLQLSGQVNFTLQDSLSRPHSFK) is linker. Residues 1529 to 1832 (KAHVLSVEQY…MALLALVMSG (304 aa)) form an ATCase (Aspartate transcarbamylase) region. Carbamoyl phosphate is bound by residues Arg1581 and Thr1582. Residue Lys1609 participates in L-aspartate binding. Carbamoyl phosphate contacts are provided by Arg1630, His1658, and Gln1661. The L-aspartate site is built by Arg1691 and Arg1754. Leu1793 and Pro1794 together coordinate carbamoyl phosphate.

This sequence in the N-terminal section; belongs to the CarA family. It in the central section; belongs to the CarB family. In the C-terminal section; belongs to the aspartate/ornithine carbamoyltransferase superfamily. ATCase family. Mg(2+) is required as a cofactor. Requires Mn(2+) as cofactor.

The protein localises to the cytoplasm. The protein resides in the nucleus. It catalyses the reaction hydrogencarbonate + L-glutamine + 2 ATP + H2O = carbamoyl phosphate + L-glutamate + 2 ADP + phosphate + 2 H(+). The enzyme catalyses L-glutamine + H2O = L-glutamate + NH4(+). The catalysed reaction is hydrogencarbonate + NH4(+) + 2 ATP = carbamoyl phosphate + 2 ADP + phosphate + 2 H(+). It carries out the reaction carbamoyl phosphate + L-aspartate = N-carbamoyl-L-aspartate + phosphate + H(+). The protein operates within pyrimidine metabolism; UMP biosynthesis via de novo pathway; (S)-dihydroorotate from bicarbonate: step 1/3. Its pathway is pyrimidine metabolism; UMP biosynthesis via de novo pathway; (S)-dihydroorotate from bicarbonate: step 2/3. With respect to regulation, both CPSase and ATCase activities are feedback inhibited by the end product UTP. Its function is as follows. Multifunctional protein that encodes the first 2 enzymatic activities of the de novo pyrimidine pathway: carbamoylphosphate synthetase (CPSase; EC 6.3.5.5) and aspartate transcarbamylase (ATCase; EC 2.1.3.2). The CPSase-function is accomplished in 2 steps, by a glutamine-dependent amidotransferase activity (GATase) that binds and cleaves glutamine to produce ammonia, followed by an ammonium-dependent carbamoyl phosphate synthetase, which reacts with the ammonia, hydrogencarbonate and ATP to form carbamoyl phosphate. The endogenously produced carbamoyl phosphate is sequestered and channeled to the ATCase active site. ATCase then catalyzes the formation of carbamoyl-L-aspartate from L-aspartate and carbamoyl phosphate. The chain is Multifunctional protein pyr-3 (pyr-3) from Neurospora crassa (strain ATCC 24698 / 74-OR23-1A / CBS 708.71 / DSM 1257 / FGSC 987).